The following is a 477-amino-acid chain: tRNA-2-methylthio-N(6)-dimethylallyladenosine synthase (477 aa).

The MTTase N-terminal domain occupies 9–129 (RKLHIKSYGC…LPQLLARAKT (121 aa)). The [4Fe-4S] cluster site is built by Cys18, Cys54, Cys92, Cys170, Cys174, and Cys177. Residues 156–386 (RSRGISAFVT…QLQNLIDSQQ (231 aa)) form the Radical SAM core domain. Residues 391-453 (RTALGRTIDV…RYSLFGTLAS (63 aa)) enclose the TRAM domain. The interval 454–477 (KPTSGEPSNHAATGGAQFQTTAGA) is disordered. Positions 464-477 (AATGGAQFQTTAGA) are enriched in low complexity.

It belongs to the methylthiotransferase family. MiaB subfamily. As to quaternary structure, monomer. [4Fe-4S] cluster is required as a cofactor.

It localises to the cytoplasm. It catalyses the reaction N(6)-dimethylallyladenosine(37) in tRNA + (sulfur carrier)-SH + AH2 + 2 S-adenosyl-L-methionine = 2-methylsulfanyl-N(6)-dimethylallyladenosine(37) in tRNA + (sulfur carrier)-H + 5'-deoxyadenosine + L-methionine + A + S-adenosyl-L-homocysteine + 2 H(+). Its function is as follows. Catalyzes the methylthiolation of N6-(dimethylallyl)adenosine (i(6)A), leading to the formation of 2-methylthio-N6-(dimethylallyl)adenosine (ms(2)i(6)A) at position 37 in tRNAs that read codons beginning with uridine. This chain is tRNA-2-methylthio-N(6)-dimethylallyladenosine synthase, found in Nitrobacter winogradskyi (strain ATCC 25391 / DSM 10237 / CIP 104748 / NCIMB 11846 / Nb-255).